The primary structure comprises 185 residues: Peptidyl-tRNA hydrolase (185 aa).

Tyr-14 provides a ligand contact to tRNA. His-19 functions as the Proton acceptor in the catalytic mechanism. 3 residues coordinate tRNA: Tyr-65, Asn-67, and Asn-113.

This sequence belongs to the PTH family. Monomer.

The protein localises to the cytoplasm. It carries out the reaction an N-acyl-L-alpha-aminoacyl-tRNA + H2O = an N-acyl-L-amino acid + a tRNA + H(+). Functionally, hydrolyzes ribosome-free peptidyl-tRNAs (with 1 or more amino acids incorporated), which drop off the ribosome during protein synthesis, or as a result of ribosome stalling. In terms of biological role, catalyzes the release of premature peptidyl moieties from peptidyl-tRNA molecules trapped in stalled 50S ribosomal subunits, and thus maintains levels of free tRNAs and 50S ribosomes. The sequence is that of Peptidyl-tRNA hydrolase from Rickettsia bellii (strain RML369-C).